We begin with the raw amino-acid sequence, 834 residues long: ATP-dependent 6-phosphofructokinase (834 aa).

An N-terminal catalytic PFK domain 1 region spans residues 1-426 (MTTTSKIIND…FYEIFIACSN (426 aa)). Residues Gly62, 123 to 124 (RS), and 153 to 156 (GDGS) each bind ATP. Asp154 serves as a coordination point for Mg(2+). Substrate contacts are provided by residues 199–201 (SID), Arg236, 243–245 (MGR), Glu299, Arg326, and 332–335 (HVQR). The Proton acceptor role is filled by Asp201. The tract at residues 427-437 (LHRRKVESKGM) is interdomain linker. The segment at 438-834 (GVLILHSGGP…DPNVNPQFTL (397 aa)) is C-terminal regulatory PFK domain 2. Beta-D-fructose 2,6-bisphosphate contacts are provided by residues Arg507, 566–570 (TIANN), Arg603, 610–612 (MGA), Glu666, Arg692, 698–701 (HLQQ), and Arg764. The interval 799–834 (SNLSEQDRPIKKSDISSPTSYSQKTFDPNVNPQFTL) is disordered. Residues 803–812 (EQDRPIKKSD) are compositionally biased toward basic and acidic residues. A compositionally biased stretch (polar residues) spans 813–834 (ISSPTSYSQKTFDPNVNPQFTL).

Belongs to the phosphofructokinase type A (PFKA) family. ATP-dependent PFK group I subfamily. Eukaryotic two domain clade 'E' sub-subfamily. As to quaternary structure, homotetramer. Mg(2+) is required as a cofactor. In terms of processing, the N-terminus is blocked.

It localises to the cytoplasm. The catalysed reaction is beta-D-fructose 6-phosphate + ATP = beta-D-fructose 1,6-bisphosphate + ADP + H(+). The protein operates within carbohydrate degradation; glycolysis; D-glyceraldehyde 3-phosphate and glycerone phosphate from D-glucose: step 3/4. Its activity is regulated as follows. Allosterically activated by ADP, AMP, or fructose 2,6-bisphosphate, and allosterically inhibited by ATP or citrate. Catalyzes the phosphorylation of D-fructose 6-phosphate to fructose 1,6-bisphosphate by ATP, the first committing step of glycolysis. The chain is ATP-dependent 6-phosphofructokinase (pfkA) from Dictyostelium discoideum (Social amoeba).